Consider the following 1097-residue polypeptide: RE1-silencing transcription factor (1097 aa).

Residues 32–122 (DLHDLSKAEL…SLELSVVEPQ (91 aa)) are interaction with SIN3A. Residues 43–57 (APQLIMLANVALTGE) are interaction with SIN3B. 2 disordered regions span residues 83–103 (NFSD…KGEP) and 127–159 (ASGA…TKPF). Acidic residues predominate over residues 86–96 (DSEEGEGLEES). The interval 145-418 (PGAEDKGKSS…KSKHPTCPNK (274 aa)) is interaction with ZFP90. A C2H2-type 1 zinc finger spans residues 159–181 (FRCKPCQYEAESEEQFVHHIRVH). The interval 201 to 212 (SGSSTAEEGDFS) is required for binding to the neuron-restrictive silencer element. 7 C2H2-type zinc fingers span residues 216–238 (IRCD…LKHH), 248–270 (YKCI…LRNH), 276–298 (YTCG…VRTH), 304–326 (YKCE…MRTH), 332–355 (FKCD…RQVH), 361–383 (LNCP…VELH), and 389–412 (FNCP…KSKH). Positions 452-479 (KIKGDVAGKKNEKSVKAEKRDVSKEKKP) are enriched in basic and acidic residues. Disordered regions lie at residues 452–642 (KIKG…MEGA), 774–837 (KEPV…EQVL), 853–938 (ESVS…NGKH), and 961–1049 (GINS…NAKE). The segment covering 480-490 (SNNVSVIQVTT) has biased composition (polar residues). Basic and acidic residues-rich tracts occupy residues 495–504 (SVTEVKEMDV) and 559–570 (PKGDSKVEENKK). Residues 577 to 593 (KSTKKKTLKNKSSKKSS) show a composition bias toward basic residues. Positions 803–836 (PPLHMEPISKKPPLRKDKKEKSNMQSERARKEQV) are enriched in basic and acidic residues. Ser-864 carries the phosphoserine modification. The span at 913-930 (INESTHISSSGQNLNTPE) shows a compositional bias: polar residues. Phosphoserine is present on Ser-971. Residues 1009–1087 (EGIHSHEGSD…HLNRHLVNVY (79 aa)) form an interaction with RCOR1 region. The C2H2-type 9 zinc-finger motif lies at 1060–1082 (FVCIFCDRSFRKGKDYSKHLNRH).

Isoform 1 and isoform 3 form heterodimers. Isoform 3: Forms homodimers and homooligomers; binds to the neuron-restrictive silencer element (NRSE) as monomer. Interacts with SIN3A, SIN3B and RCOR1. Interacts with CDYL. Interacts with EHMT1 and EHMT2 only in the presence of CDYL. Part of a complex containing at least CDYL, REST, WIZ, SETB1, EHMT1 and EHMT2. Interacts (via zinc-finger DNA-binding domain) with ZFP90 (via N- and C-termini); the interaction inhibits REST repressor activity. Interacts (via C2H2-type zinc finger 5) with PRICKLE1. Interacts with FBXW11 and BTRC. Interacts with USP7. In terms of processing, O-glycosylated. Phosphorylated; phosphorylation is required for ubiquitination. Post-translationally, ubiquitinated; ubiquitination is mediated by BTRC and leads to proteasomal degradation in G2 phase. Ubiquitination increases during neuronal differentiation. Deubiquitinated by USP7; leading to its stabilization and promoting the maintenance of neural progenitor cells. Expressed in neurons of the prefrontal cortex, in hippocampal pyramidal neurons, dentate gyrus granule neurons and cerebellar Purkinje and granule neurons (at protein level). Expressed in dopaminergic neurons of the substantia nigra (at protein level). Expressed in neural progenitor cells (at protein level). In patients suffering from Alzheimer disease, frontotemporal dementia or dementia with Lewy bodies, decreased nuclear levels have been observed in neurons of the prefrontal cortex and the hippocampus, but not in neurons of the dentate gyrus and cerebellum (at protein level). In patients with Parkinson disease or dementia with Lewy bodies, decreased nuclear levels have been observed in dopaminergic neurons and in cortical neurons and localization to Lewy bodies and pale bodies was detected (at protein level). Expressed at higher levels in weakly invasive breast cancer cell lines and at lower levels in highly invasive breast cancer lines (at protein level). Ubiquitous. Expressed at higher levels in the tissues of the lymphocytic compartment, including spleen, thymus, peripheral blood lymphocytes and ovary.

The protein localises to the nucleus. Its subcellular location is the cytoplasm. Transcriptional repressor which binds neuron-restrictive silencer element (NRSE) and represses neuronal gene transcription in non-neuronal cells. Restricts the expression of neuronal genes by associating with two distinct corepressors, SIN3A and RCOR1, which in turn recruit histone deacetylase to the promoters of REST-regulated genes. Mediates repression by recruiting the BHC complex at RE1/NRSE sites which acts by deacetylating and demethylating specific sites on histones, thereby acting as a chromatin modifier. Transcriptional repression by REST-CDYL via the recruitment of histone methyltransferase EHMT2 may be important in transformation suppression. Represses the expression of SRRM4 in non-neural cells to prevent the activation of neural-specific splicing events and to prevent production of REST isoform 3. Repressor activity may be inhibited by forming heterodimers with isoform 3, thereby preventing binding to NRSE or binding to corepressors and leading to derepression of target genes. Also maintains repression of neuronal genes in neural stem cells, and allows transcription and differentiation into neurons by dissociation from RE1/NRSE sites of target genes. Thereby is involved in maintaining the quiescent state of adult neural stem cells and preventing premature differentiation into mature neurons. Plays a role in the developmental switch in synaptic NMDA receptor composition during postnatal development, by repressing GRIN2B expression and thereby altering NMDA receptor properties from containing primarily GRIN2B to primarily GRIN2A subunits. Acts as a regulator of osteoblast differentiation. Key repressor of gene expression in hypoxia; represses genes in hypoxia by direct binding to an RE1/NRSE site on their promoter regions. May also function in stress resistance in the brain during aging; possibly by regulating expression of genes involved in cell death and in the stress response. Repressor of gene expression in the hippocampus after ischemia by directly binding to RE1/NRSE sites and recruiting SIN3A and RCOR1 to promoters of target genes, thereby promoting changes in chromatin modifications and ischemia-induced cell death. After ischemia, might play a role in repression of miR-132 expression in hippocampal neurons, thereby leading to neuronal cell death. Negatively regulates the expression of SRRM3 in breast cancer cell lines. In terms of biological role, binds to the 3' region of the neuron-restrictive silencer element (NRSE), with lower affinity than full-length REST isoform 1. Exhibits weaker repressor activity compared to isoform 1. May negatively regulate the repressor activity of isoform 1 by binding to isoform 1, thereby preventing its binding to NRSE and leading to derepression of target genes. However, in another study, does not appear to be implicated in repressor activity of a NRSE motif-containing reporter construct nor in inhibitory activity on the isoform 1 transcriptional repressor activity. Post-transcriptional inactivation of REST by SRRM4-dependent alternative splicing into isoform 3 is required in mechanosensory hair cells in the inner ear for derepression of neuronal genes and hearing. The polypeptide is RE1-silencing transcription factor (REST) (Homo sapiens (Human)).